We begin with the raw amino-acid sequence, 519 residues long: Xylose import ATP-binding protein XylG (519 aa).

ABC transporter domains are found at residues 6–245 and 262–507; these read LTMR…VGRE and LEAR…LTPA. 38–45 serves as a coordination point for ATP; sequence GENGAGKS.

The protein belongs to the ABC transporter superfamily. Xylose importer (TC 3.A.1.2.4) family. In terms of assembly, the complex is composed of two ATP-binding proteins (XylG), two transmembrane proteins (XylH) and a solute-binding protein (XylF).

The protein resides in the cell inner membrane. It carries out the reaction D-xylose(out) + ATP + H2O = D-xylose(in) + ADP + phosphate + H(+). Functionally, part of the ABC transporter complex XylFGH involved in xylose import. Responsible for energy coupling to the transport system. The protein is Xylose import ATP-binding protein XylG of Burkholderia ambifaria (strain ATCC BAA-244 / DSM 16087 / CCUG 44356 / LMG 19182 / AMMD) (Burkholderia cepacia (strain AMMD)).